Reading from the N-terminus, the 208-residue chain is Phosphoheptose isomerase (208 aa).

Positions 38 to 200 (MALTLARGRK…LFENVLALQP (163 aa)) constitute an SIS domain. 53–55 (NGG) lines the substrate pocket. Residues His-62 and Glu-66 each contribute to the Zn(2+) site. Substrate is bound by residues Glu-66, 95–96 (ND), 121–123 (STS), Ser-126, and Gln-173. Zn(2+) is bound by residues Gln-173 and His-181.

The protein belongs to the SIS family. GmhA subfamily. As to quaternary structure, homotetramer. Zn(2+) is required as a cofactor.

It is found in the cytoplasm. The catalysed reaction is 2 D-sedoheptulose 7-phosphate = D-glycero-alpha-D-manno-heptose 7-phosphate + D-glycero-beta-D-manno-heptose 7-phosphate. Its pathway is carbohydrate biosynthesis; D-glycero-D-manno-heptose 7-phosphate biosynthesis; D-glycero-alpha-D-manno-heptose 7-phosphate and D-glycero-beta-D-manno-heptose 7-phosphate from sedoheptulose 7-phosphate: step 1/1. Functionally, catalyzes the isomerization of sedoheptulose 7-phosphate in D-glycero-D-manno-heptose 7-phosphate. This is Phosphoheptose isomerase from Nitratidesulfovibrio vulgaris (strain DSM 19637 / Miyazaki F) (Desulfovibrio vulgaris).